The primary structure comprises 249 residues: MNRYFIYLAYNGRNYCGWQIQPNGITVQQRIQQCLSILLRKSVTIIGAGRTDAGVHANLMTAHFDWEEILSTTSLTKRLNGILPCDILIYKIIPVKKNAHARFDAISRKYKYYITYQKNPFRNEQLFRLKQPLNKHLMNEASNILSEYSDFTSFCKLHSNTRTNVCRISKAEWNTVQGIDIFTIKADRFLRNMVRSIVGTMIDIGKNKLSITDFRKIIESKNHIMLKSSVPAHALFLTDIEYPNWIFKN.

The active-site Nucleophile is the Asp-52. Residue Tyr-110 coordinates substrate.

This sequence belongs to the tRNA pseudouridine synthase TruA family. Homodimer.

It catalyses the reaction uridine(38/39/40) in tRNA = pseudouridine(38/39/40) in tRNA. In terms of biological role, formation of pseudouridine at positions 38, 39 and 40 in the anticodon stem and loop of transfer RNAs. The chain is tRNA pseudouridine synthase A from Azobacteroides pseudotrichonymphae genomovar. CFP2.